We begin with the raw amino-acid sequence, 278 residues long: Tryptophan synthase alpha chain (278 aa).

Active-site proton acceptor residues include E50 and D61.

The protein belongs to the TrpA family. As to quaternary structure, tetramer of two alpha and two beta chains.

It carries out the reaction (1S,2R)-1-C-(indol-3-yl)glycerol 3-phosphate + L-serine = D-glyceraldehyde 3-phosphate + L-tryptophan + H2O. It participates in amino-acid biosynthesis; L-tryptophan biosynthesis; L-tryptophan from chorismate: step 5/5. Its function is as follows. The alpha subunit is responsible for the aldol cleavage of indoleglycerol phosphate to indole and glyceraldehyde 3-phosphate. This is Tryptophan synthase alpha chain from Rhodopseudomonas palustris (strain ATCC BAA-98 / CGA009).